Here is a 115-residue protein sequence, read N- to C-terminus: Large ribosomal subunit protein bL20 (115 aa).

Belongs to the bacterial ribosomal protein bL20 family.

Its function is as follows. Binds directly to 23S ribosomal RNA and is necessary for the in vitro assembly process of the 50S ribosomal subunit. It is not involved in the protein synthesizing functions of that subunit. The sequence is that of Large ribosomal subunit protein bL20 from Prochlorococcus marinus (strain MIT 9515).